Here is a 421-residue protein sequence, read N- to C-terminus: RNase J-like protein (421 aa).

Residues histidine 55, histidine 57, aspartate 59, histidine 60, histidine 132, aspartate 153, and histidine 389 each coordinate Zn(2+).

The protein belongs to the metallo-beta-lactamase superfamily. RNA-metabolizing metallo-beta-lactamase-like family. In terms of assembly, forms homodimers on heating to 60 degrees Celsius which may be the active form. Requires Zn(2+) as cofactor.

With respect to regulation, inhibited by imidazole. Functionally, a 5'-3' exoribonuclease with a strong reference for 5'-monophosphorylated RNA and no endoribonuclease activty. This chain is RNase J-like protein, found in Methanocaldococcus jannaschii (strain ATCC 43067 / DSM 2661 / JAL-1 / JCM 10045 / NBRC 100440) (Methanococcus jannaschii).